Reading from the N-terminus, the 176-residue chain is Dual-action ribosomal maturation protein DarP (176 aa).

Belongs to the DarP family.

It localises to the cytoplasm. Functionally, member of a network of 50S ribosomal subunit biogenesis factors which assembles along the 30S-50S interface, preventing incorrect 23S rRNA structures from forming. Promotes peptidyl transferase center (PTC) maturation. This chain is Dual-action ribosomal maturation protein DarP, found in Aliivibrio fischeri (strain MJ11) (Vibrio fischeri).